The sequence spans 163 residues: uncharacterized protein (163 aa).

A run of 2 helical transmembrane segments spans residues 7-27 (YLNE…CYIV) and 51-71 (LVIF…LVWF).

The protein resides in the cell membrane. This is an uncharacterized protein from Rickettsia prowazekii (strain Madrid E).